The chain runs to 106 residues: uncharacterized protein (106 aa).

2 disordered regions span residues 27–47 and 83–106; these read FSDS…DVSD and SPAM…VQSK. Acidic residues predominate over residues 29–39; sequence DSEDEPDDEAS. Basic and acidic residues predominate over residues 94-106; the sequence is GIEREDRGGVQSK.

Its subcellular location is the mitochondrion. This is an uncharacterized protein from Arabidopsis thaliana (Mouse-ear cress).